We begin with the raw amino-acid sequence, 78 residues long: Leukemia-associated protein 1 (78 aa).

In terms of biological role, may act as a tumor suppressor. This is Leukemia-associated protein 1 (DLEU1) from Homo sapiens (Human).